Consider the following 428-residue polypeptide: Dihydroorotase (428 aa).

2 residues coordinate Zn(2+): His-59 and His-61. Residues 61–63 (HLR) and Asn-93 each bind substrate. Zn(2+) is bound by residues Asp-151, His-178, and His-231. Position 277 (Asn-277) interacts with substrate. Asp-304 serves as a coordination point for Zn(2+). Asp-304 is an active-site residue. Residues His-308 and 322-323 (FG) each bind substrate.

It belongs to the metallo-dependent hydrolases superfamily. DHOase family. Class I DHOase subfamily. It depends on Zn(2+) as a cofactor.

The catalysed reaction is (S)-dihydroorotate + H2O = N-carbamoyl-L-aspartate + H(+). Its pathway is pyrimidine metabolism; UMP biosynthesis via de novo pathway; (S)-dihydroorotate from bicarbonate: step 3/3. In terms of biological role, catalyzes the reversible cyclization of carbamoyl aspartate to dihydroorotate. The chain is Dihydroorotase from Bacillus cereus (strain ATCC 10987 / NRS 248).